We begin with the raw amino-acid sequence, 662 residues long: Transketolase (662 aa).

His-28 provides a ligand contact to substrate. Thiamine diphosphate is bound by residues His-68 and 115–117 (GPL). Position 156 (Asp-156) interacts with Mg(2+). 2 residues coordinate thiamine diphosphate: Gly-157 and Asn-186. Residues Asn-186 and Ile-188 each contribute to the Mg(2+) site. Substrate contacts are provided by His-261, Arg-356, and Ser-383. His-261 serves as a coordination point for thiamine diphosphate. Glu-410 functions as the Proton donor in the catalytic mechanism. Phe-436 lines the thiamine diphosphate pocket. Residues His-460, Asp-468, and Arg-519 each coordinate substrate.

It belongs to the transketolase family. In terms of assembly, homodimer. Requires Mg(2+) as cofactor. It depends on Ca(2+) as a cofactor. Mn(2+) serves as cofactor. The cofactor is Co(2+). Thiamine diphosphate is required as a cofactor.

It carries out the reaction D-sedoheptulose 7-phosphate + D-glyceraldehyde 3-phosphate = aldehydo-D-ribose 5-phosphate + D-xylulose 5-phosphate. It functions in the pathway carbohydrate biosynthesis; Calvin cycle. Its pathway is carbohydrate degradation; pentose phosphate pathway. Catalyzes the transfer of a two-carbon ketol group from a ketose donor to an aldose acceptor, via a covalent intermediate with the cofactor thiamine pyrophosphate. The polypeptide is Transketolase (tkt) (Staphylococcus epidermidis (strain ATCC 12228 / FDA PCI 1200)).